A 106-amino-acid chain; its full sequence is MHLERSVQSQLTESKEIARPYSLWGISLAQHSFKTSTRSTGKKRSKGSTSQDGKKQESLESRNDLGPTIVGLIRKILSYSSKKEFSNLTGLESGGSSPPFSLAVSK.

Disordered stretches follow at residues 33–64 (FKTSTRSTGKKRSKGSTSQDGKKQESLESRND) and 87–106 (NLTGLESGGSSPPFSLAVSK). The segment covering 52–63 (DGKKQESLESRN) has biased composition (basic and acidic residues). Positions 87–99 (NLTGLESGGSSPP) are enriched in polar residues.

The protein resides in the mitochondrion. This is an uncharacterized protein from Arabidopsis thaliana (Mouse-ear cress).